The chain runs to 630 residues: Elongation factor 4 (630 aa).

The disordered stretch occupies residues 1-22 (MTVARNRAGAGPGKGSPISSFA). Residues 30–211 (ARIRNFCIIA…EVVRQVPAPV (182 aa)) form the tr-type G domain. GTP is bound by residues 42–47 (DHGKST) and 158–161 (NKID).

The protein belongs to the TRAFAC class translation factor GTPase superfamily. Classic translation factor GTPase family. LepA subfamily.

Its subcellular location is the cell membrane. It carries out the reaction GTP + H2O = GDP + phosphate + H(+). In terms of biological role, required for accurate and efficient protein synthesis under certain stress conditions. May act as a fidelity factor of the translation reaction, by catalyzing a one-codon backward translocation of tRNAs on improperly translocated ribosomes. Back-translocation proceeds from a post-translocation (POST) complex to a pre-translocation (PRE) complex, thus giving elongation factor G a second chance to translocate the tRNAs correctly. Binds to ribosomes in a GTP-dependent manner. The polypeptide is Elongation factor 4 (Rhodococcus opacus (strain B4)).